The chain runs to 352 residues: C-C chemokine receptor type 5 (352 aa).

The Extracellular portion of the chain corresponds to 1 to 30 (MDYQVSSPTYDIDYYTSEPCQKVNVKQIAA). Y3 carries the post-translational modification Sulfotyrosine. S6 and S7 each carry an O-linked (GalNAc...) serine glycan. Residues Y10, Y14, and Y15 each carry the sulfotyrosine modification. 2 cysteine pairs are disulfide-bonded: C20/C269 and C101/C178. Residues 31-58 (RLLPPLYSLVFIFGFVGNILVVLILINC) traverse the membrane as a helical segment. At 59-68 (KRLKSMTDIY) the chain is on the cytoplasmic side. A helical transmembrane segment spans residues 69-89 (LLNLAISDLFFLLTVPFWAHY). Residues 90 to 102 (AAARWDFGNTMCQ) are Extracellular-facing. The helical transmembrane segment at 103 to 124 (LLTGLYFIGFFSGIFFIILLTI) threads the bilayer. Over 125-141 (DRYLAIVHAVFALKART) the chain is Cytoplasmic. The chain crosses the membrane as a helical span at residues 142–166 (VTFGVVTSVITWVVAVFASLPGIIF). Residues 167 to 198 (TRSQREGLHYTCSSHFPYSQYQFWKNFQTLKI) are Extracellular-facing. A helical membrane pass occupies residues 199 to 218 (VILGLVLPLLVMVICYSGIL). Residues 219–235 (KTLLRCRNEKKRHRAVR) lie on the Cytoplasmic side of the membrane. Residues 236–260 (LIFTIMIVYFLFWAPYNIVLLLNTF) form a helical membrane-spanning segment. Topologically, residues 261–277 (QEFFGLNNCSSSNRLDQ) are extracellular. The chain crosses the membrane as a helical span at residues 278 to 301 (AMQVTETLGMTHCCINPIIYAFVG). Residues 302 to 352 (EKFRNYLLVFFQKHIAKRFCKCCSIFQQEAPERASSVYTRSTGEQEISVGL) are Cytoplasmic-facing. Residues C321, C323, and C324 are each lipidated (S-palmitoyl cysteine). S336, S337, S342, and S349 each carry phosphoserine; by BARK1.

It belongs to the G-protein coupled receptor 1 family. As to quaternary structure, interacts with PRAF2. Efficient ligand binding to CCL3/MIP-1alpha and CCL4/MIP-1beta requires sulfation, O-glycosylation and sialic acid modifications. Glycosylation on Ser-6 is required for efficient binding of CCL4. Interacts with GRK2. Interacts with ARRB1 and ARRB2. Interacts with CNIH4. Interacts with S100A4; this interaction stimulates T-lymphocyte chemotaxis. Sulfated on at least 2 of the N-terminal tyrosines. Sulfation is required for efficient binding of the chemokines, CCL3 and CCL4. Post-translationally, palmitoylation in the C-terminal is important for cell surface expression. In terms of processing, phosphorylation on serine residues in the C-terminal is stimulated by binding CC chemokines especially by APO-RANTES. O-glycosylated, but not N-glycosylated. Ser-6 appears to be the major site even if Ser-7 may be also O-glycosylated. Also sialylated glycans present which contribute to chemokine binding. Thr-16 and Ser-17 may also be glycosylated and, if so, with small moieties such as a T-antigen.

The protein resides in the cell membrane. In terms of biological role, receptor for a number of inflammatory CC-chemokines including CCL3/MIP-1-alpha, CCL4/MIP-1-beta and RANTES and subsequently transduces a signal by increasing the intracellular calcium ion level. May play a role in the control of granulocytic lineage proliferation or differentiation. Participates in T-lymphocyte migration to the infection site by acting as a chemotactic receptor. This Nasalis larvatus (Proboscis monkey) protein is C-C chemokine receptor type 5 (CCR5).